Reading from the N-terminus, the 202-residue chain is Probable chemoreceptor glutamine deamidase CheD (202 aa).

The protein belongs to the CheD family.

The enzyme catalyses L-glutaminyl-[protein] + H2O = L-glutamyl-[protein] + NH4(+). Functionally, probably deamidates glutamine residues to glutamate on methyl-accepting chemotaxis receptors (MCPs), playing an important role in chemotaxis. This is Probable chemoreceptor glutamine deamidase CheD from Thiobacillus denitrificans (strain ATCC 25259 / T1).